The following is a 387-amino-acid chain: Carbamoyl phosphate synthase small chain (387 aa).

The segment at 1–196 (MEGVLSQLAV…FSINKQKFLF (196 aa)) is CPSase. L-glutamine contacts are provided by serine 51, glycine 245, and glycine 247. The Glutamine amidotransferase type-1 domain occupies 197 to 384 (HVVVYDFGVK…IKLIVSQKTT (188 aa)). The active-site Nucleophile is cysteine 273. 4 residues coordinate L-glutamine: leucine 274, glutamine 277, asparagine 315, and phenylalanine 318. Residues histidine 357 and glutamate 359 contribute to the active site.

This sequence belongs to the CarA family. As to quaternary structure, composed of two chains; the small (or glutamine) chain promotes the hydrolysis of glutamine to ammonia, which is used by the large (or ammonia) chain to synthesize carbamoyl phosphate. Tetramer of heterodimers (alpha,beta)4.

The enzyme catalyses hydrogencarbonate + L-glutamine + 2 ATP + H2O = carbamoyl phosphate + L-glutamate + 2 ADP + phosphate + 2 H(+). It catalyses the reaction L-glutamine + H2O = L-glutamate + NH4(+). Its pathway is amino-acid biosynthesis; L-arginine biosynthesis; carbamoyl phosphate from bicarbonate: step 1/1. It functions in the pathway pyrimidine metabolism; UMP biosynthesis via de novo pathway; (S)-dihydroorotate from bicarbonate: step 1/3. Functionally, small subunit of the glutamine-dependent carbamoyl phosphate synthetase (CPSase). CPSase catalyzes the formation of carbamoyl phosphate from the ammonia moiety of glutamine, carbonate, and phosphate donated by ATP, constituting the first step of 2 biosynthetic pathways, one leading to arginine and/or urea and the other to pyrimidine nucleotides. The small subunit (glutamine amidotransferase) binds and cleaves glutamine to supply the large subunit with the substrate ammonia. This is Carbamoyl phosphate synthase small chain from Buchnera aphidicola subsp. Acyrthosiphon pisum (strain APS) (Acyrthosiphon pisum symbiotic bacterium).